A 261-amino-acid chain; its full sequence is Putative hydro-lyase Nther_1142 (261 aa).

This sequence belongs to the D-glutamate cyclase family.

This chain is Putative hydro-lyase Nther_1142, found in Natranaerobius thermophilus (strain ATCC BAA-1301 / DSM 18059 / JW/NM-WN-LF).